A 405-amino-acid polypeptide reads, in one-letter code: Probable tRNA sulfurtransferase (405 aa).

A THUMP domain is found at 60–165 (DKIDQRLKLV…QDAIYISNQL (106 aa)). Residues 183-184 (ML), 208-209 (HF), Arg265, Gly287, and Gln296 contribute to the ATP site.

The protein belongs to the ThiI family.

The protein localises to the cytoplasm. It carries out the reaction [ThiI sulfur-carrier protein]-S-sulfanyl-L-cysteine + a uridine in tRNA + 2 reduced [2Fe-2S]-[ferredoxin] + ATP + H(+) = [ThiI sulfur-carrier protein]-L-cysteine + a 4-thiouridine in tRNA + 2 oxidized [2Fe-2S]-[ferredoxin] + AMP + diphosphate. The enzyme catalyses [ThiS sulfur-carrier protein]-C-terminal Gly-Gly-AMP + S-sulfanyl-L-cysteinyl-[cysteine desulfurase] + AH2 = [ThiS sulfur-carrier protein]-C-terminal-Gly-aminoethanethioate + L-cysteinyl-[cysteine desulfurase] + A + AMP + 2 H(+). The protein operates within cofactor biosynthesis; thiamine diphosphate biosynthesis. Its function is as follows. Catalyzes the ATP-dependent transfer of a sulfur to tRNA to produce 4-thiouridine in position 8 of tRNAs, which functions as a near-UV photosensor. Also catalyzes the transfer of sulfur to the sulfur carrier protein ThiS, forming ThiS-thiocarboxylate. This is a step in the synthesis of thiazole, in the thiamine biosynthesis pathway. The sulfur is donated as persulfide by IscS. This is Probable tRNA sulfurtransferase from Lactobacillus gasseri (strain ATCC 33323 / DSM 20243 / BCRC 14619 / CIP 102991 / JCM 1131 / KCTC 3163 / NCIMB 11718 / NCTC 13722 / AM63).